The primary structure comprises 205 residues: Ribosomal RNA large subunit methyltransferase E (205 aa).

S-adenosyl-L-methionine-binding residues include G60, W62, D80, D96, and D121. K161 serves as the catalytic Proton acceptor.

Belongs to the class I-like SAM-binding methyltransferase superfamily. RNA methyltransferase RlmE family.

It localises to the cytoplasm. It carries out the reaction uridine(2552) in 23S rRNA + S-adenosyl-L-methionine = 2'-O-methyluridine(2552) in 23S rRNA + S-adenosyl-L-homocysteine + H(+). In terms of biological role, specifically methylates the uridine in position 2552 of 23S rRNA at the 2'-O position of the ribose in the fully assembled 50S ribosomal subunit. The chain is Ribosomal RNA large subunit methyltransferase E from Dechloromonas aromatica (strain RCB).